Reading from the N-terminus, the 137-residue chain is Maltose regulon regulatory protein MalI (137 aa).

In terms of domain architecture, HTH lacI-type spans 6-60; the sequence is VTITEVAKHAGVSVTTVSMVLGNKGRISPDTIEKVNASVEALGYIRNRAAANLRS. Positions 8-27 form a DNA-binding region, H-T-H motif; it reads ITEVAKHAGVSVTTVSMVLG.

Its function is as follows. Repressor for the malX and malY genes. This chain is Maltose regulon regulatory protein MalI (malI), found in Vibrio furnissii.